We begin with the raw amino-acid sequence, 154 residues long: Fimbrial protein (154 aa).

The propeptide at 1–6 (MNAQKG) is leader sequence. Position 7 is an N-methylphenylalanine (F7). Residues 7–29 (FTLIELMIVIAIIGILAAIALPA) traverse the membrane as a helical segment.

Belongs to the N-Me-Phe pilin family. The pili are polar flexible filaments of about 5.4 nanometers diameter and 2.5 micrometers average length; they consist of only a single polypeptide chain arranged in a helical configuration of five subunits per turn in the assembled pilus.

Its subcellular location is the fimbrium. The protein localises to the membrane. The sequence is that of Fimbrial protein (tfpA) from Moraxella nonliquefaciens.